Here is a 675-residue protein sequence, read N- to C-terminus: UvrABC system protein B (675 aa).

In terms of domain architecture, Helicase ATP-binding spans 32 to 417; that stretch reads EGLSDGLAYQ…EHAGQVVEQV (386 aa). 45–52 provides a ligand contact to ATP; it reads GVTGSGKT. The Beta-hairpin signature appears at 98 to 121; it reads YYDYYQPEAYVPSRDLFIEKDSAI. Residues 436-602 enclose the Helicase C-terminal domain; it reads QVDDLMSEIN…QIKKQVKDII (167 aa). Residues 634 to 669 enclose the UVR domain; it reads IKEIAKLEKAMQQAARDLQFEEAAVLRDRIRNIKEN.

Belongs to the UvrB family. In terms of assembly, forms a heterotetramer with UvrA during the search for lesions. Interacts with UvrC in an incision complex.

It is found in the cytoplasm. In terms of biological role, the UvrABC repair system catalyzes the recognition and processing of DNA lesions. A damage recognition complex composed of 2 UvrA and 2 UvrB subunits scans DNA for abnormalities. Upon binding of the UvrA(2)B(2) complex to a putative damaged site, the DNA wraps around one UvrB monomer. DNA wrap is dependent on ATP binding by UvrB and probably causes local melting of the DNA helix, facilitating insertion of UvrB beta-hairpin between the DNA strands. Then UvrB probes one DNA strand for the presence of a lesion. If a lesion is found the UvrA subunits dissociate and the UvrB-DNA preincision complex is formed. This complex is subsequently bound by UvrC and the second UvrB is released. If no lesion is found, the DNA wraps around the other UvrB subunit that will check the other stand for damage. This is UvrABC system protein B from Neisseria gonorrhoeae.